Consider the following 191-residue polypeptide: Peptide methionine sulfoxide reductase MsrA (191 aa).

Cysteine 21 is an active-site residue.

The protein belongs to the MsrA Met sulfoxide reductase family.

It catalyses the reaction L-methionyl-[protein] + [thioredoxin]-disulfide + H2O = L-methionyl-(S)-S-oxide-[protein] + [thioredoxin]-dithiol. It carries out the reaction [thioredoxin]-disulfide + L-methionine + H2O = L-methionine (S)-S-oxide + [thioredoxin]-dithiol. Functionally, has an important function as a repair enzyme for proteins that have been inactivated by oxidation. Catalyzes the reversible oxidation-reduction of methionine sulfoxide in proteins to methionine. This chain is Peptide methionine sulfoxide reductase MsrA, found in Ralstonia nicotianae (strain ATCC BAA-1114 / GMI1000) (Ralstonia solanacearum).